An 860-amino-acid polypeptide reads, in one-letter code: Protein argonaute-3 (860 aa).

The region spanning proline 230 to alanine 349 is the PAZ domain. The region spanning leucine 518 to valine 819 is the Piwi domain. The segment at tyrosine 530–lysine 567 is interaction with guide RNA. Residues aspartate 598, glutamate 638, and aspartate 670 each coordinate a divalent metal cation. Residues glutamine 758–tyrosine 805 form an interaction with guide RNA region. Residue histidine 808 coordinates a divalent metal cation.

The protein belongs to the argonaute family. Ago subfamily.

The protein resides in the cytoplasm. It is found in the P-body. The enzyme catalyses Endonucleolytic cleavage to 5'-phosphomonoester.. In terms of biological role, required for RNA-mediated gene silencing (RNAi). Binds to short RNAs such as microRNAs (miRNAs) and represses the translation of mRNAs which are complementary to them. Possesses RNA slicer activity but only on select RNAs bearing 5'- and 3'-flanking sequences to the region of guide-target complementarity. This Danio rerio (Zebrafish) protein is Protein argonaute-3 (ago3).